Consider the following 102-residue polypeptide: Co-chaperonin GroES (102 aa).

It belongs to the GroES chaperonin family. In terms of assembly, heptamer of 7 subunits arranged in a ring. Interacts with the chaperonin GroEL.

It is found in the cytoplasm. Together with the chaperonin GroEL, plays an essential role in assisting protein folding. The GroEL-GroES system forms a nano-cage that allows encapsulation of the non-native substrate proteins and provides a physical environment optimized to promote and accelerate protein folding. GroES binds to the apical surface of the GroEL ring, thereby capping the opening of the GroEL channel. This is Co-chaperonin GroES from Chlamydia felis (strain Fe/C-56) (Chlamydophila felis).